Reading from the N-terminus, the 280-residue chain is Shikimate dehydrogenase (NADP(+)) (280 aa).

Shikimate is bound by residues 18–20 (SRS) and Thr-65. Lys-69 functions as the Proton acceptor in the catalytic mechanism. 2 residues coordinate shikimate: Asn-90 and Asp-105. NADP(+) contacts are provided by residues 131–135 (GAGGA), 154–159 (NRTRAR), and Ile-219. Tyr-221 lines the shikimate pocket. Gly-242 contributes to the NADP(+) binding site.

This sequence belongs to the shikimate dehydrogenase family. Homodimer.

It carries out the reaction shikimate + NADP(+) = 3-dehydroshikimate + NADPH + H(+). The protein operates within metabolic intermediate biosynthesis; chorismate biosynthesis; chorismate from D-erythrose 4-phosphate and phosphoenolpyruvate: step 4/7. In terms of biological role, involved in the biosynthesis of the chorismate, which leads to the biosynthesis of aromatic amino acids. Catalyzes the reversible NADPH linked reduction of 3-dehydroshikimate (DHSA) to yield shikimate (SA). The polypeptide is Shikimate dehydrogenase (NADP(+)) (Methylocella silvestris (strain DSM 15510 / CIP 108128 / LMG 27833 / NCIMB 13906 / BL2)).